The sequence spans 229 residues: Ribonuclease 3 (229 aa).

Positions 4–133 constitute an RNase III domain; the sequence is WEELQESVGF…FIGALYLDNG (130 aa). Mg(2+) is bound at residue Glu46. Asp50 is a catalytic residue. Mg(2+)-binding residues include Asp119 and Glu122. Glu122 is an active-site residue. The 70-residue stretch at 159–228 folds into the DRBM domain; the sequence is DYKTQLQEIV…AQFAINQLTH (70 aa).

This sequence belongs to the ribonuclease III family. In terms of assembly, homodimer. Mg(2+) is required as a cofactor.

It localises to the cytoplasm. It carries out the reaction Endonucleolytic cleavage to 5'-phosphomonoester.. In terms of biological role, digests double-stranded RNA. Involved in the processing of primary rRNA transcript to yield the immediate precursors to the large and small rRNAs (23S and 16S). Processes some mRNAs, and tRNAs when they are encoded in the rRNA operon. Processes pre-crRNA and tracrRNA of type II CRISPR loci if present in the organism. In Listeria monocytogenes serotype 4b (strain CLIP80459), this protein is Ribonuclease 3.